The chain runs to 591 residues: Aspartate--tRNA ligase (591 aa).

Residue Glu-176 coordinates L-aspartate. The aspartate stretch occupies residues Gln-200–Lys-203. Residue Arg-222 participates in L-aspartate binding. Residues Arg-222–Glu-224 and Gln-231 each bind ATP. His-450 is an L-aspartate binding site. Glu-484 contacts ATP. Arg-491 provides a ligand contact to L-aspartate. An ATP-binding site is contributed by Gly-536–Arg-539.

The protein belongs to the class-II aminoacyl-tRNA synthetase family. Type 1 subfamily. As to quaternary structure, homodimer.

The protein resides in the cytoplasm. The catalysed reaction is tRNA(Asp) + L-aspartate + ATP = L-aspartyl-tRNA(Asp) + AMP + diphosphate. Functionally, catalyzes the attachment of L-aspartate to tRNA(Asp) in a two-step reaction: L-aspartate is first activated by ATP to form Asp-AMP and then transferred to the acceptor end of tRNA(Asp). The protein is Aspartate--tRNA ligase of Listeria welshimeri serovar 6b (strain ATCC 35897 / DSM 20650 / CCUG 15529 / CIP 8149 / NCTC 11857 / SLCC 5334 / V8).